The following is a 95-amino-acid chain: MKLNREDVLHIARLARLGLEEDEINRLSKELSALLEHFEVLQQVDTTGVEPTSQSTPVKSVLKEDTIKPSYAREDILSNAPRREGDYIRIRAVME.

The protein belongs to the GatC family. In terms of assembly, heterotrimer of A, B and C subunits.

It carries out the reaction L-glutamyl-tRNA(Gln) + L-glutamine + ATP + H2O = L-glutaminyl-tRNA(Gln) + L-glutamate + ADP + phosphate + H(+). It catalyses the reaction L-aspartyl-tRNA(Asn) + L-glutamine + ATP + H2O = L-asparaginyl-tRNA(Asn) + L-glutamate + ADP + phosphate + 2 H(+). Allows the formation of correctly charged Asn-tRNA(Asn) or Gln-tRNA(Gln) through the transamidation of misacylated Asp-tRNA(Asn) or Glu-tRNA(Gln) in organisms which lack either or both of asparaginyl-tRNA or glutaminyl-tRNA synthetases. The reaction takes place in the presence of glutamine and ATP through an activated phospho-Asp-tRNA(Asn) or phospho-Glu-tRNA(Gln). This is Aspartyl/glutamyl-tRNA(Asn/Gln) amidotransferase subunit C from Dehalococcoides mccartyi (strain ATCC BAA-2100 / JCM 16839 / KCTC 5957 / BAV1).